The primary structure comprises 650 residues: MAEGTAEAPLENGGGGDSGAGALERGVAPIKRQYLTTKEQFHQFLEAKGQEKTCRETEVGDPAGNELAEPEAKRIRLEDGQTADGQTEEAAEPGEQLQTQKRARGQNKGRPHVKPTNYDKNRLCPSLIQESAAKCFFGDRCRFLHDVGRYLETKPADLGPRCVLFETFGRCPYGVTCRFAGAHLRPEGQNLVQEELAARGTQPPSIRNGLDKALQQQLRKREVRFERAEQALRRFSQGPTPAAAVPEGTAAEGAPRQENCGAQQVPAGPGTSTPPSSPVRTCGPLTDEDVVRLRPCEKKRLDIRGKLYLAPLTTCGNLPFRRICKRFGADVTCGEMAVCTNLLQGQMSEWALLKRHQCEDIFGVQLEGAFPDTMTKCAELLSRTVEVDFVDINVGCPIDLVYKKGGGCALMNRSTKFQQIVRGMNQVLDVPLTVKIRTGVQERVNLAHRLLPELRDWGVALVTLHGRSREQRYTKLADWQYIEECVQAASPMPLFGNGDILSFEDANRAMQTGVTGIMIARGALLKPWLFTEIKEQRHWDISSSERLDILRDFTNYGLEHWGSDTQGVEKTRRFLLEWLSFLCRYVPVGLLERLPQRINERPPYYLGRDYLETLMASQKAADWIRISEMLLGPVPPSFAFLPKHKANAYK.

Disordered stretches follow at residues 1–24 (MAEG…GALE) and 46–120 (EAKG…NYDK). Ala2 carries the post-translational modification N-acetylalanine. Basic and acidic residues-rich tracts occupy residues 48–58 (KGQEKTCRETE) and 70–79 (PEAKRIRLED). Residues 101-113 (KRARGQNKGRPHV) are compositionally biased toward basic residues. C3H1-type zinc fingers lie at residues 118–148 (YDKN…HDVG) and 156–186 (ADLG…HLRP). The segment at 235-284 (FSQGPTPAAAVPEGTAAEGAPRQENCGAQQVPAGPGTSTPPSSPVRTCGP) is disordered. Position 236 is a phosphoserine (Ser236). The residue at position 273 (Thr273) is a Phosphothreonine. Phosphoserine is present on residues Ser276 and Ser277. Residues 311–313 (PLT) and Gln365 contribute to the FMN site. Cys396 acts as the Proton donor in catalysis. A Glycyl lysine isopeptide (Lys-Gly) (interchain with G-Cter in SUMO2) cross-link involves residue Lys416. FMN is bound by residues Lys435, His465, 497–499 (NGD), and 520–521 (AR).

The protein belongs to the Dus family. Dus3 subfamily. The cofactor is FMN.

It carries out the reaction 5,6-dihydrouridine(47) in tRNA + NAD(+) = uridine(47) in tRNA + NADH + H(+). The enzyme catalyses 5,6-dihydrouridine(47) in tRNA + NADP(+) = uridine(47) in tRNA + NADPH + H(+). It catalyses the reaction a 5,6-dihydrouridine in mRNA + NAD(+) = a uridine in mRNA + NADH + H(+). The catalysed reaction is a 5,6-dihydrouridine in mRNA + NADP(+) = a uridine in mRNA + NADPH + H(+). Functionally, catalyzes the synthesis of dihydrouridine, a modified base, in various RNAs, such as tRNAs, mRNAs and some long non-coding RNAs (lncRNAs). Mainly modifies the uridine in position 47 (U47) in the D-loop of most cytoplasmic tRNAs. Also able to mediate the formation of dihydrouridine in some mRNAs, thereby regulating their translation. The protein is tRNA-dihydrouridine(47) synthase [NAD(P)(+)]-like of Homo sapiens (Human).